Consider the following 221-residue polypeptide: Ribonuclease 3 (221 aa).

In terms of domain architecture, RNase III spans 4–121; it reads LEQLEKKLGY…LWAAVYIDSG (118 aa). E40 is a Mg(2+) binding site. D44 is an active-site residue. 2 residues coordinate Mg(2+): D107 and E110. The active site involves E110. A DRBM domain is found at 151–219; that stretch reads DYKTILQEIT…AEELIKLLEE (69 aa).

The protein belongs to the ribonuclease III family. In terms of assembly, homodimer. Mg(2+) is required as a cofactor.

It localises to the cytoplasm. The enzyme catalyses Endonucleolytic cleavage to 5'-phosphomonoester.. Its function is as follows. Digests double-stranded RNA. Involved in the processing of primary rRNA transcript to yield the immediate precursors to the large and small rRNAs (23S and 16S). Also processes some mRNAs, and tRNAs when they are encoded in the rRNA operon. Probably processes pre-crRNA and tracrRNA of type II CRISPR loci if present in the organism. The sequence is that of Ribonuclease 3 (rnc) from Aquifex aeolicus (strain VF5).